Reading from the N-terminus, the 462-residue chain is Argininosuccinate lyase (462 aa).

The protein belongs to the lyase 1 family. Argininosuccinate lyase subfamily.

It is found in the cytoplasm. The catalysed reaction is 2-(N(omega)-L-arginino)succinate = fumarate + L-arginine. It participates in amino-acid biosynthesis; L-arginine biosynthesis; L-arginine from L-ornithine and carbamoyl phosphate: step 3/3. The sequence is that of Argininosuccinate lyase from Hydrogenovibrio crunogenus (strain DSM 25203 / XCL-2) (Thiomicrospira crunogena).